Consider the following 466-residue polypeptide: Putative multidrug resistance protein MdtD (466 aa).

The next 14 helical transmembrane spans lie at 11–31, 48–68, 71–91, 105–125, 137–157, 164–184, 194–214, 218–238, 262–282, 286–306, 328–347, 351–370, 403–423, and 429–449; these read LWIVAFGFFMQTLDTTIVNTA, SVIVSYVLTVAVMLPASGWLA, IGVKNIFFAAILLFTLGSLLC, VIQGIGGAMMVPVGRLTVMKI, FVTLPGQIGPLMGPALGGFLV, WIFLINLPVGIIGALATWFLM, FDISGFLWLAVGMATLTLALD, SLGIPPIAIFALITVGLIALL, FSIGLTGGLLARIGSGMLPFM, FLQLGMGFSPFHAGLMMVPMV, VLIVSTLLLALVTALFALVA, WIWMIPIVLFFLGMVNAIRF, LGVSIAGILLGMFSQPHMAAG, and MVFIYTYLSMIVIIALPALIF.

The protein belongs to the major facilitator superfamily. TCR/Tet family.

The protein resides in the cell inner membrane. The polypeptide is Putative multidrug resistance protein MdtD (Pectobacterium carotovorum subsp. carotovorum (strain PC1)).